A 306-amino-acid polypeptide reads, in one-letter code: MVESLPTTFSDSVHIAVIGGTGLQSLEGFIPIATINPLTPWGYPSAPIHILSHNNTPIAFLSRHGTHHELAPHEIPNRANIAALRSMGVRTIIAFSAVGSLREEIKPRDFVVPDQVIDRTKGVRPFTFFEKGVVGHVGFADPFDERIAKVVRECGHALEGEGIVLHDKGTIICMEGPAFSTRAESHMYRSWGGSVINMSALPEAKLAREAEMVYQMICMATDYDCWHSTADVDVEMVMGHMHANGQNAKRLVGAVLDALNMRWSTIDSIRRRKNKPELANAQQHQIWRGRTYHFAWSISACYFSSE.

Residues T21, 63-64 (RH), and 96-97 (SA) contribute to the phosphate site. Residue M198 coordinates substrate. S199 contributes to the phosphate binding site. Substrate is bound at residue 222–224 (DYD).

This sequence belongs to the PNP/MTAP phosphorylase family. MTAP subfamily. Homotrimer.

The protein localises to the cytoplasm. Its subcellular location is the nucleus. The catalysed reaction is S-methyl-5'-thioadenosine + phosphate = 5-(methylsulfanyl)-alpha-D-ribose 1-phosphate + adenine. It functions in the pathway amino-acid biosynthesis; L-methionine biosynthesis via salvage pathway; S-methyl-5-thio-alpha-D-ribose 1-phosphate from S-methyl-5'-thioadenosine (phosphorylase route): step 1/1. Catalyzes the reversible phosphorylation of S-methyl-5'-thioadenosine (MTA) to adenine and 5-methylthioribose-1-phosphate. Involved in the breakdown of MTA, a major by-product of polyamine biosynthesis. Responsible for the first step in the methionine salvage pathway after MTA has been generated from S-adenosylmethionine. Has broad substrate specificity with 6-aminopurine nucleosides as preferred substrates. This Sclerotinia sclerotiorum (strain ATCC 18683 / 1980 / Ss-1) (White mold) protein is S-methyl-5'-thioadenosine phosphorylase.